The primary structure comprises 350 residues: Phosphoribosylformylglycinamidine cyclo-ligase (350 aa).

Belongs to the AIR synthase family.

The protein localises to the cytoplasm. It catalyses the reaction 2-formamido-N(1)-(5-O-phospho-beta-D-ribosyl)acetamidine + ATP = 5-amino-1-(5-phospho-beta-D-ribosyl)imidazole + ADP + phosphate + H(+). It functions in the pathway purine metabolism; IMP biosynthesis via de novo pathway; 5-amino-1-(5-phospho-D-ribosyl)imidazole from N(2)-formyl-N(1)-(5-phospho-D-ribosyl)glycinamide: step 2/2. The protein is Phosphoribosylformylglycinamidine cyclo-ligase of Cupriavidus necator (strain ATCC 17699 / DSM 428 / KCTC 22496 / NCIMB 10442 / H16 / Stanier 337) (Ralstonia eutropha).